The sequence spans 268 residues: Microtubule-associated protein RP/EB family member 1 (268 aa).

The residue at position 2 (Ala-2) is an N-acetylalanine. A Calponin-homology (CH) domain is found at 14–116 (NLSRHDMLAW…FVQWFKKFFD (103 aa)). Residue Lys-66 is modified to N6-crotonyllysine. Tyr-124 is modified (phosphotyrosine). Positions 124–268 (YDPVAARQGQ…GGPQEEQEEY (145 aa)) are interaction with MTUS2/TIP150. The interval 146–191 (LSKPKKPLGSGSAAPQRPIATQRTTAAPKAGPGMVRKNPGMGNGDD) is disordered. Position 155 is a phosphoserine (Ser-155). The 71-residue stretch at 185 to 255 (GMGNGDDEAA…LYATDEGFVI (71 aa)) folds into the EB1 C-terminal domain. Residues 206–211 (TVEDLE) are interaction with APC. The segment at 208 to 268 (EDLEKERDFY…GGPQEEQEEY (61 aa)) is DCTN1-binding. At Lys-220 the chain carries N6-acetyllysine. The APC-binding stretch occupies residues 220–242 (KLRNIELICQENEGENDPVLQRI). The segment at 232–255 (EGENDPVLQRIVDILYATDEGFVI) is interaction with SKA1.

Belongs to the MAPRE family. As to quaternary structure, homodimer. Heterodimer with MAPRE3. Interacts with DCTN1, DCTN2, TERF1 and dynein intermediate chain. Interaction with DIAPH1 and DIAPH2. Interacts (via C-terminal residues 206-211) with APC (via C-terminal residues 2674-2845); the interaction inhibits association with and bundling of F-actin. Interacts with CLASP2, DST, KIF2C and STIM1; probably required for their targeting to the growing microtubule plus ends. Interacts with MTUS2; interaction is direct and probably targets MTUS2 to microtubules. Interacts (via C-terminus) with SKA1 (via SXIP motif); the interaction is direct and stabilizes the kinetochore-microtubule attachment of the SKA1 complex. Interacts with APC2. Interacts with CLASP1. Interacts with CDK5RAP2. According to another report, MAPRE1 does not interact with CDK5RAP2. Interacts with MACF1. Interacts with RABL2/RABL2A; binds preferentially to GTP-bound RABL2. Interacts with KCNAB2. Interacts (via C-terminus) with CLIP1. Interacts with SLAIN2 and SLAIN1. Interacts with KIF18B; this interaction is required for efficient accumulation of KIF18B at microtubule plus ends. Interacts with MISP. Interacts with KNSTRN. Interacts with NCKAP5L. Interacts with AKAP9. Interacts with PDE4DIP; this interaction, which is PDE4DIP isoform-specific, is required for its recruitment to the Golgi apparatus. Interacts with CAMSAP2. May form a pericentrosomal complex with AKAP9, CDK5RAP2 and PDE4DIP isoform 2/MMG8/SMYLE; within this complex, MAPRE1 binding to CDK5RAP2 may be mediated by PDE4DIP. Contrary to other mammalian species, does not interact with CDK5RAP2, possibly due to the lack of conservation of the MAPRE1-binding motif in rat CDK5RAP2. Interacts with AKNA. Interacts with GAS2L1, GAS2L2, and GAS2L3. Interacts with RARRES1 and AGBL2. Post-translationally, acetylation at Lys-220 by KAT2B/PCAF promotes dynamic kinetochore-microtubule interactions in early mitosis. Crotonylated by KAT5 during mitosis, promoting astral microtubule plasticity and dynamic connection between astral microtubules and the cortex during mitotic chromosome segregation, thereby ensuring accurate spindle positioning in mitosis. Decrotonylated by HDAC3.

It is found in the cytoplasm. The protein localises to the cytoskeleton. Its subcellular location is the microtubule organizing center. It localises to the centrosome. The protein resides in the golgi apparatus. It is found in the spindle. The protein localises to the spindle pole. Plus-end tracking protein (+TIP) that binds to the plus-end of microtubules and regulates the dynamics of the microtubule cytoskeleton. Recruits other +TIP proteins to microtubules by binding to a conserved Ser-X-Leu-Pro (SXLP) motif in their polypeptide chains. Promotes cytoplasmic microtubule nucleation and elongation. Involved in mitotic spindle positioning by stabilizing microtubules and promoting dynamic connection between astral microtubules and the cortex during mitotic chromosome segregation. Assists chromosome alignment in metaphase by recruiting the SKA complex to the spindle and stabilizing its interactions with microtubule bundles (K-fibers). Also acts as a regulator of minus-end microtubule organization: interacts with the complex formed by AKAP9 and PDE4DIP, leading to recruit CAMSAP2 to the Golgi apparatus, thereby tethering non-centrosomal minus-end microtubules to the Golgi, an important step for polarized cell movement. Promotes elongation of CAMSAP2-decorated microtubule stretches on the minus-end of microtubules. Acts as a regulator of autophagosome transport via interaction with CAMSAP2. Functions downstream of Rho GTPases and DIAPH1 in stable microtubule formation. May play a role in cell migration. In Rattus norvegicus (Rat), this protein is Microtubule-associated protein RP/EB family member 1 (Mapre1).